The chain runs to 225 residues: 3-dehydroquinate dehydratase (225 aa).

3-dehydroquinate-binding positions include S6, 30-32, and R62; that span reads EWR. H118 functions as the Proton donor/acceptor in the catalytic mechanism. K143 acts as the Schiff-base intermediate with substrate in catalysis. Positions 186, 205, and 209 each coordinate 3-dehydroquinate.

It belongs to the type-I 3-dehydroquinase family. In terms of assembly, homodimer.

It catalyses the reaction 3-dehydroquinate = 3-dehydroshikimate + H2O. It participates in metabolic intermediate biosynthesis; chorismate biosynthesis; chorismate from D-erythrose 4-phosphate and phosphoenolpyruvate: step 3/7. Functionally, involved in the third step of the chorismate pathway, which leads to the biosynthesis of aromatic amino acids. Catalyzes the cis-dehydration of 3-dehydroquinate (DHQ) and introduces the first double bond of the aromatic ring to yield 3-dehydroshikimate. The polypeptide is 3-dehydroquinate dehydratase (Streptococcus gordonii (strain Challis / ATCC 35105 / BCRC 15272 / CH1 / DL1 / V288)).